The following is a 354-amino-acid chain: Uroporphyrinogen decarboxylase (354 aa).

Substrate is bound by residues 27–31 (RQAGR), Asp-77, Tyr-154, Thr-209, and His-327.

This sequence belongs to the uroporphyrinogen decarboxylase family. As to quaternary structure, homodimer.

The protein resides in the cytoplasm. It catalyses the reaction uroporphyrinogen III + 4 H(+) = coproporphyrinogen III + 4 CO2. The protein operates within porphyrin-containing compound metabolism; protoporphyrin-IX biosynthesis; coproporphyrinogen-III from 5-aminolevulinate: step 4/4. Functionally, catalyzes the decarboxylation of four acetate groups of uroporphyrinogen-III to yield coproporphyrinogen-III. This is Uroporphyrinogen decarboxylase from Citrobacter koseri (strain ATCC BAA-895 / CDC 4225-83 / SGSC4696).